Here is a 690-residue protein sequence, read N- to C-terminus: Protein MODIFIED TRANSPORT TO THE VACUOLE 1 (690 aa).

The VHS domain maps to 20–150 (VTSDEDKVAP…PESINRRIEG (131 aa)). Disordered regions lie at residues 228-258 (DGNY…SVRV) and 518-551 (FSID…HQAP). Positions 243 to 257 (GHASGEASESSASVR) are enriched in low complexity. The span at 520–536 (IDENNSNQKGSSSSTLP) shows a compositional bias: polar residues.

In terms of assembly, binds to clathrin heavy chain. As to expression, expressed in inflorescence stems, stigmas, roots, roots meristems, embryos, and floral and leaf vasculatures, but absent from the floral abscission zone.

The protein resides in the golgi apparatus. Its subcellular location is the trans-Golgi network. It localises to the cytoplasmic vesicle. The protein localises to the clathrin-coated vesicle. Mediates clathrin-dependent trafficking of vacuolar cargo from the trans-Golgi network (TGN). Promotes plant growth. The chain is Protein MODIFIED TRANSPORT TO THE VACUOLE 1 from Arabidopsis thaliana (Mouse-ear cress).